The chain runs to 1722 residues: Signal-induced proliferation-associated 1-like protein 2 (1722 aa).

The segment covering 1–12 (MSDPRQSQEEKH) has biased composition (basic and acidic residues). 2 disordered regions span residues 1–29 (MSDP…RIMQ) and 42–72 (NGNM…PAVP). A compositionally biased stretch (polar residues) spans 45–56 (MGPTTSLNASNS). At serine 148 the chain carries Phosphoserine. Over residues 360-377 (GASAASQTQMPTGQTGNC) the composition is skewed to polar residues. Residues 360–401 (GASAASQTQMPTGQTGNCESPLGSKEDLNSKENLDADEGDGK) form a disordered region. Serine 379 and serine 383 each carry phosphoserine. Residues 383–401 (SKEDLNSKENLDADEGDGK) are compositionally biased toward basic and acidic residues. The Rap-GAP domain occupies 595 to 812 (LLKLDEQGLS…RTRQEYLKDL (218 aa)). In terms of domain architecture, PDZ spans 950 to 1026 (EMTLRRNGLG…VKVVIIQPHD (77 aa)). Residue serine 1029 is modified to Phosphoserine. 2 disordered regions span residues 1067–1245 (HRVP…FGSG) and 1330–1360 (EGSM…SKSS). 2 stretches are compositionally biased toward low complexity: residues 1093 to 1102 (QQLLQQAQAA) and 1119 to 1130 (SSPSNQSSSSDP). 2 stretches are compositionally biased toward basic and acidic residues: residues 1164–1183 (DGAR…ETKW) and 1194–1217 (YKER…HIGD). Over residues 1219–1236 (SCSSHSSSNTLSSNTSSN) the composition is skewed to low complexity. A Phosphoserine modification is found at serine 1244. The span at 1337-1360 (SEISSHSSGSHHSGSPSAHCSKSS) shows a compositional bias: low complexity. Residues serine 1461, serine 1472, serine 1478, serine 1488, serine 1549, serine 1552, and serine 1591 each carry the phosphoserine modification. A coiled-coil region spans residues 1654-1712 (LTGKVNQLELILRQLQTDLRKEKQDKAVLQAEVQHLRQDNMRLQEESQTATAQLRKFTE).

This chain is Signal-induced proliferation-associated 1-like protein 2 (SIPA1L2), found in Homo sapiens (Human).